Reading from the N-terminus, the 274-residue chain is Dermonecrotic toxin SdSicTox-betaIIB1bxii (274 aa).

Residue His-5 is part of the active site. Positions 25 and 27 each coordinate Mg(2+). His-41 acts as the Nucleophile in catalysis. 2 disulfide bridges follow: Cys-45–Cys-51 and Cys-47–Cys-190. Residue Asp-85 participates in Mg(2+) binding.

The protein belongs to the arthropod phospholipase D family. Class II subfamily. Requires Mg(2+) as cofactor. Expressed by the venom gland.

The protein localises to the secreted. The catalysed reaction is an N-(acyl)-sphingosylphosphocholine = an N-(acyl)-sphingosyl-1,3-cyclic phosphate + choline. It catalyses the reaction an N-(acyl)-sphingosylphosphoethanolamine = an N-(acyl)-sphingosyl-1,3-cyclic phosphate + ethanolamine. It carries out the reaction a 1-acyl-sn-glycero-3-phosphocholine = a 1-acyl-sn-glycero-2,3-cyclic phosphate + choline. The enzyme catalyses a 1-acyl-sn-glycero-3-phosphoethanolamine = a 1-acyl-sn-glycero-2,3-cyclic phosphate + ethanolamine. Functionally, dermonecrotic toxins cleave the phosphodiester linkage between the phosphate and headgroup of certain phospholipids (sphingolipid and lysolipid substrates), forming an alcohol (often choline) and a cyclic phosphate. This toxin acts on sphingomyelin (SM). It may also act on ceramide phosphoethanolamine (CPE), lysophosphatidylcholine (LPC) and lysophosphatidylethanolamine (LPE), but not on lysophosphatidylserine (LPS), and lysophosphatidylglycerol (LPG). It acts by transphosphatidylation, releasing exclusively cyclic phosphate products as second products. Induces dermonecrosis, hemolysis, increased vascular permeability, edema, inflammatory response, and platelet aggregation. This chain is Dermonecrotic toxin SdSicTox-betaIIB1bxii, found in Sicarius cf. damarensis (strain GJB-2008) (Six-eyed sand spider).